Consider the following 538-residue polypeptide: Protein PNS1 (538 aa).

A compositionally biased stretch (low complexity) spans 1 to 54 (MGESDAYYNGGQQQQYNGGYQQQYQPQPPAASYQAPPQQPYQQQPYQQGPPQNG). The interval 1 to 67 (MGESDAYYNG…GNGYMPAQGY (67 aa)) is disordered. The Cytoplasmic segment spans residues 1 to 88 (MGESDAYYNG…FKIAKPKYND (88 aa)). A helical membrane pass occupies residues 89 to 109 (LWAGILLILVFAGFVVVSGLA). Residues 110 to 137 (LQGYSANKGNAGDGIYNNKNDFSPNTST) are Extracellular-facing. Asn134 is a glycosylation site (N-linked (GlcNAc...) asparagine). The helical transmembrane segment at 138–158 (VILFMFVLAVAFVLSYAYVWM) threads the bilayer. At 159-165 (ARLFPKQ) the chain is on the cytoplasmic side. Residues 166–186 (FIWVTGILNVCWAIGTAIFYL) traverse the membrane as a helical segment. Over 187 to 191 (WRKYW) the chain is Extracellular. A helical transmembrane segment spans residues 192–212 (SAGIVFLIFGLFMAFCFWTWI). At 213–239 (SRIPFSALMLKTTIDVSKKYGHVYLVS) the chain is on the cytoplasmic side. Residues 240 to 260 (LIGGIIATAFSAWYAITLVGI) traverse the membrane as a helical segment. Residues 261 to 280 (YVKYQPAQDNPSCADGGCGK) lie on the Extracellular side of the membrane. A helical transmembrane segment spans residues 281 to 301 (GKVIGLIAFITFAMYWFSEWL). The Cytoplasmic segment spans residues 302–335 (KNTIHTTIAGVYGSWYFNPHNFPKDATRASAKRA). Residues 336 to 356 (LTYSFGSIALGSLLVAIIQFL) form a helical membrane-spanning segment. Topologically, residues 357–372 (RQICNAARNQEGADGS) are extracellular. Residues 373 to 393 (FVGYAIFCCISCLLGLLEWAV) traverse the membrane as a helical segment. Topologically, residues 394–434 (EFINRYAFCHIALYGKAYFAAAKDTWKMIKDRGIDALINDC) are cytoplasmic. Residues 435–455 (LIGPVLSFGALFIAYACALLA) form a helical membrane-spanning segment. The Extracellular portion of the chain corresponds to 456–474 (YLYLYFTDPAYNSDGQYTA). A helical transmembrane segment spans residues 475-495 (VVMAFSFLIGFQIANVFTTPI). Over 496–538 (SSGIETIFVAAGWDPQVMWRDHPELYNEMVRVYPKVQQVIKDR) the chain is Cytoplasmic.

The protein belongs to the CTL (choline transporter-like) family.

The protein localises to the cell membrane. Its function is as follows. Probably involved in transport through the plasma membrane. This is Protein PNS1 (PNS1) from Gibberella zeae (strain ATCC MYA-4620 / CBS 123657 / FGSC 9075 / NRRL 31084 / PH-1) (Wheat head blight fungus).